Here is a 499-residue protein sequence, read N- to C-terminus: MKEEIDAPVSTDASGTDLENARDQPSGEKPTAVDIYLVEWDGPNDPELPMNFPLWKKSLITCIFSTLTIWVTFSSSVFSAAAGITSKEFHVSVEVMTLGTSLTVLGFTVGPLVWGPMSELYGRLKPLYIGYAIFIIFQVPVAVAQNLETLMLARFFLGFFGTSALAIIPGALADFWGPVERAIAISLFSAATFVGPIFGPIIGGFIVDSSLGWRWTAWITMIPASFFGIIAFLTLPETYHPVLLQRRASRLRKETRIWAYHSRLDENTPTFGEILTKYLFRPIQMLFLEPILVCMTIYISLIYGILYLFFVAYPIAFREVRNWKSLGIAALPFLGILVGVLMGCLLVTIATRLWYAPKLQNGSVVPEDRLPPMIVAAILLPIGLFWFGWTSSPSISWAPQAIAGAPIGMGILMIWMQGLNYLIDVYLVVANSAMSANTLIRSAVGAAFPLFATAMYHKLGVDWATSLLGFLSIAMIPIPVIFYFYGAKIRALSRFSPKW.

Residues 1–29 (MKEEIDAPVSTDASGTDLENARDQPSGEK) form a disordered region. 8 helical membrane passes run 58 to 78 (SLITCIFSTLTIWVTFSSSVF), 95 to 115 (VMTLGTSLTVLGFTVGPLVWG), 124 to 144 (LKPLYIGYAIFIIFQVPVAVA), 155 to 175 (FFLGFFGTSALAIIPGALADF), 187 to 207 (LFSAATFVGPIFGPIIGGFIV), 215 to 235 (WTAWITMIPASFFGIIAFLTL), 291 to 311 (ILVCMTIYISLIYGILYLFFV), and 327 to 347 (GIAALPFLGILVGVLMGCLLV). Residue asparagine 361 is glycosylated (N-linked (GlcNAc...) asparagine). Helical transmembrane passes span 370–390 (LPPMIVAAILLPIGLFWFGWT), 395–415 (ISWAPQAIAGAPIGMGILMIW), 443–463 (AVGAAFPLFATAMYHKLGVDW), and 467–487 (LLGFLSIAMIPIPVIFYFYGA).

Belongs to the major facilitator superfamily. CAR1 family.

The protein resides in the membrane. In terms of biological role, MFS transporter; part of the gene cluster that mediates the biosynthesis the mycotoxin citrinin, a hepato-nephrotoxic compound to humans due to inhibition of respiration complex III. This chain is Citrinin biosynthesis cluster MFS transporter mrr1, found in Monascus ruber (Mold).